The sequence spans 1178 residues: MGNTLTGRSNAIAPIISAEDAKTYISDEEYRRIRQAFQRFKNGCINYDEFCYHVLGGAQIPEEKRRLLFSFFSHGAETISFDNLLSSLVGLCRVEEVQSRFIEEYHEFASWGLSPPKLTIPLNDSYISFYEVMSYVTHLSVNEVIELEKVFATISDRAVCKLNEEKWKQALGGCFPDSYAERLFAVFDENRDGQIDFRELVCTLSALCRGPLPGRISQLARIWDVDCDKLLSDEELSNMYKDLNVPEEHQTVTKSSNGKSALVDFGIWAQENEKYVNEYYSMALQIGHICLGLRPESRKMELQIVNEFEKRASELPLSEWNIVASGWHAELRSFLEADKNPNPIDNSGIKGTREDSWTSKVACISAESARLKPDLIPSDYIRVPVPLWRAWLRWHGCALTVDSQFTRKYLDGEFFEDNKPALELYPLEILLLGHDRKKSQDGTENTPRSLTSWACAQVSRSMTVDELLALCKTELRLGDGDARLWQVVKENEEGNVLLDDGAQNLHQLYSSLGKTKKVNKMKLLLEVRERGTGVWPEELRASLSGKQITAASTLSSNAQLSDSSGRPGAVGLVNYGNFCYRNAGIQCLARVSPLTQYFLDEDNLDAIKRGNLRRGDAAETTIEYAKLLREMWAAKKKNIAPNDFNDAIRLSSDMFECSEQHDCQEFVAFLLDQLHTSMYESNKSLHPSPEESEGTDSNKLSDSSKKKEADKEEADEEKAERSWTEYEKQNESLVTQLFTGQLRSRLICRTCQSSSSVFEPFTSLSLPIGFEDVDLYQVIVVHRDGRIPRRYGFRLSRDSKVGNLREVVAVSSGISMSHLTIQCMSSKGTLMSRSPNHRSSNLRDELPLSSFPSGARLYALELPESTGEDQWRVAMHRKLQYNHEPYILGSTAGFIVSRFGLPLIVGLDEEVTGKKLYEDVMYQMHRFMEHSVNSSSSRAHDPCEDENSGYPFTLCLVDPNYEWCGQCPALRFCRGCPIRPDESKVFIPANCPIAVDWLPIALYLRYNHSQEQACEDDPSVAETWSRHFAPSSLEHCIEKFSCPETLDAAIQCDRCEKKTMRDKVMTIWKLPKYLIIHLKRFEFLREQGRMGKCKRTVNFPLKHFDPAPFVDKPDGNTYECIALANHYGQLSCGHFIAYAKSNEDKWLLLNDCSVREVSEEEVDKQGAYLLFYERKDVK.

EF-hand domains lie at 28 to 60, 175 to 210, and 211 to 246; these read EEYR…GAQI, FPDS…LCRG, and PLPG…LNVP. Residues Asp188, Asn190, Asp192, Gln194, Glu199, Asp224, Asp226, Asp228, and Glu235 each coordinate Ca(2+). The DUSP domain maps to 296 to 410; the sequence is ESRKMELQIV…VDSQFTRKYL (115 aa). Positions 570–1175 constitute a USP domain; it reads VGLVNYGNFC…GAYLLFYERK (606 aa). Cys579 functions as the Nucleophile in the catalytic mechanism. The tract at residues 681 to 725 is disordered; sequence SNKSLHPSPEESEGTDSNKLSDSSKKKEADKEEADEEKAERSWTE. His1134 functions as the Proton acceptor in the catalytic mechanism.

The protein belongs to the peptidase C19 family. As to expression, expressed in excretory cells, coelomocytes, head neurons, hypodermal cells, germ cells, oocytes, sperm and pharynx (at protein level).

Its subcellular location is the nucleus. It localises to the cytoplasm. It is found in the cytoskeleton. The protein localises to the microtubule organizing center. It carries out the reaction Thiol-dependent hydrolysis of ester, thioester, amide, peptide and isopeptide bonds formed by the C-terminal Gly of ubiquitin (a 76-residue protein attached to proteins as an intracellular targeting signal).. Functionally, ubiquitin-protein hydrolase which cleaves ubiquitin from ubiquitinated proteins. Plays a role in embryo osmoregulation. Probably by regulating osmosis, controls actin redistribution in the 1-cell embryos and thus actin-dependent processes such as cytokinesis and P-granules segregation. During the first embryonic mitotic division, involved in the formation of a functional microtubule organizing center provided by the male pronucleus. Acts as a positive regulator of the mTORC1 signaling. The chain is Ubiquitin carboxyl-terminal hydrolase cyk-3 from Caenorhabditis elegans.